The sequence spans 326 residues: DNA-directed RNA polymerase subunit alpha (326 aa).

Positions 1 to 231 (MQTALLKPKI…DQLSVFAALE (231 aa)) are alpha N-terminal domain (alpha-NTD). The tract at residues 247–326 (IDPILLRPVD…ENWPPAGLEK (80 aa)) is alpha C-terminal domain (alpha-CTD).

Belongs to the RNA polymerase alpha chain family. Homodimer. The RNAP catalytic core consists of 2 alpha, 1 beta, 1 beta' and 1 omega subunit. When a sigma factor is associated with the core the holoenzyme is formed, which can initiate transcription.

The enzyme catalyses RNA(n) + a ribonucleoside 5'-triphosphate = RNA(n+1) + diphosphate. DNA-dependent RNA polymerase catalyzes the transcription of DNA into RNA using the four ribonucleoside triphosphates as substrates. This is DNA-directed RNA polymerase subunit alpha from Ralstonia nicotianae (strain ATCC BAA-1114 / GMI1000) (Ralstonia solanacearum).